The sequence spans 410 residues: Regulator of microtubule dynamics protein 2 (410 aa).

Residues I10–Y27 form a helical membrane-spanning segment. Residues R71–G109 adopt a coiled-coil conformation. Phosphoserine is present on S121. The segment covering P122–L131 has biased composition (basic residues). The interval P122 to V153 is disordered. At T139 the chain carries Phosphothreonine. Position 152 is a phosphotyrosine (Y152). Residues T154 and T157 each carry the phosphothreonine modification.

It belongs to the RMDN family. As to quaternary structure, interacts with microtubules.

It localises to the membrane. Its subcellular location is the cytoplasm. The protein localises to the cytoskeleton. The protein resides in the spindle. It is found in the spindle pole. The polypeptide is Regulator of microtubule dynamics protein 2 (RMDN2) (Bos taurus (Bovine)).